We begin with the raw amino-acid sequence, 197 residues long: Imidazoleglycerol-phosphate dehydratase (197 aa).

It belongs to the imidazoleglycerol-phosphate dehydratase family.

It is found in the cytoplasm. The catalysed reaction is D-erythro-1-(imidazol-4-yl)glycerol 3-phosphate = 3-(imidazol-4-yl)-2-oxopropyl phosphate + H2O. It functions in the pathway amino-acid biosynthesis; L-histidine biosynthesis; L-histidine from 5-phospho-alpha-D-ribose 1-diphosphate: step 6/9. The protein is Imidazoleglycerol-phosphate dehydratase of Gloeobacter violaceus (strain ATCC 29082 / PCC 7421).